Here is a 389-residue protein sequence, read N- to C-terminus: tRNA-specific 2-thiouridylase MnmA (389 aa).

ATP is bound by residues 34 to 41 and Leu-60; that span reads AMSGGVDS. Cys-128 acts as the Nucleophile in catalysis. Cys-128 and Cys-225 are disulfide-bonded. Gly-152 serves as a coordination point for ATP. Residues 174–176 form an interaction with tRNA region; the sequence is RDQ. Cys-225 serves as the catalytic Cysteine persulfide intermediate.

This sequence belongs to the MnmA/TRMU family.

It is found in the cytoplasm. The enzyme catalyses S-sulfanyl-L-cysteinyl-[protein] + uridine(34) in tRNA + AH2 + ATP = 2-thiouridine(34) in tRNA + L-cysteinyl-[protein] + A + AMP + diphosphate + H(+). Catalyzes the 2-thiolation of uridine at the wobble position (U34) of tRNA, leading to the formation of s(2)U34. This is tRNA-specific 2-thiouridylase MnmA from Paracoccus denitrificans (strain Pd 1222).